The following is a 95-amino-acid chain: Large ribosomal subunit protein bL21 (95 aa).

Belongs to the bacterial ribosomal protein bL21 family. In terms of assembly, part of the 50S ribosomal subunit. Contacts protein L20.

Functionally, this protein binds to 23S rRNA in the presence of protein L20. This is Large ribosomal subunit protein bL21 from Prosthecochloris vibrioformis (Chlorobium vibrioforme).